The following is a 420-amino-acid chain: Phosphoribosylamine--glycine ligase (420 aa).

The 207-residue stretch at Lys-108–Asp-314 folds into the ATP-grasp domain. Ile-134 to Ser-195 contacts ATP. Mg(2+) contacts are provided by Glu-284 and Asn-286.

It belongs to the GARS family. Mg(2+) is required as a cofactor. It depends on Mn(2+) as a cofactor.

It carries out the reaction 5-phospho-beta-D-ribosylamine + glycine + ATP = N(1)-(5-phospho-beta-D-ribosyl)glycinamide + ADP + phosphate + H(+). It participates in purine metabolism; IMP biosynthesis via de novo pathway; N(1)-(5-phospho-D-ribosyl)glycinamide from 5-phospho-alpha-D-ribose 1-diphosphate: step 2/2. The chain is Phosphoribosylamine--glycine ligase from Streptococcus pneumoniae serotype 4 (strain ATCC BAA-334 / TIGR4).